The following is a 309-amino-acid chain: Metal ABC transporter substrate-binding lipoprotein FimA (309 aa).

A signal peptide spans 1–20 (MKKIASVLALFVALLFGLLA). Cys-21 is lipidated: N-palmitoyl cysteine. Cys-21 carries S-diacylglycerol cysteine lipidation. His-67, His-139, Glu-205, and Asp-280 together coordinate a divalent metal cation.

The protein belongs to the bacterial solute-binding protein 9 family. Lipoprotein receptor antigen (Lrai) subfamily.

The protein localises to the cell membrane. In terms of biological role, part of an ATP-binding cassette (ABC) transport system involved in metal import. Binds a metal with high affinity and specificity and delivers it to the membrane permease for translocation into the cytoplasm. Also acts as an adhesin which is involved on adherence to extracellular matrix. It is an important factor in pathogenesis and infection. May contribute to the formation and accumulation of dental plaque. The protein is Metal ABC transporter substrate-binding lipoprotein FimA (fimA) of Streptococcus parasanguinis.